The primary structure comprises 111 residues: Secreted transmembrane peptide 5 (111 aa).

Residues 1-46 (MRLSVFYIFITRLAMTKNATKNEMGSKSPNIVALVLPLLLILYTLS) form the signal peptide. Positions 66-79 (IVWTPHSNSCGGSP) match the SCOOP motif motif. The SxS motif essential for MIK2 binding motif lies at 72-74 (SNS). Residues 89-111 (TTGRPCRRSRPPGTNIPVSDQSP) are disordered.

It belongs to the serine rich endogenous peptide (SCOOP) phytocytokine family. In terms of assembly, interacts with MIK2 (via extracellular leucine-rich repeat domain); this interaction triggers the formation of complex between MIK2 and the BAK1/SERK3 and SERK4 coreceptors, and subsequent BAK1 activation by phosphorylation. In terms of tissue distribution, mostly expressed in leaves, and, to a lower extent, in roots, stems, siliques, seeds and flowers.

The protein localises to the cell membrane. The protein resides in the secreted. It is found in the extracellular space. It localises to the apoplast. In terms of biological role, brassicaceae-specific phytocytokine (plant endogenous peptide released into the apoplast) perceived by MIK2 in a BAK1/SERK3 and SERK4 coreceptors-dependent manner, that modulates various physiological and antimicrobial processes including growth prevention and reactive oxygen species (ROS) response regulation. The polypeptide is Secreted transmembrane peptide 5 (Arabidopsis thaliana (Mouse-ear cress)).